A 245-amino-acid chain; its full sequence is NAD-dependent protein deacetylase (245 aa).

The 245-residue stretch at 1-245 (MIFVQQFEEV…EFVEGLSSRK (245 aa)) folds into the Deacetylase sirtuin-type domain. 8 residues coordinate NAD(+): A26, T30, F37, R38, Q105, I107, D108, and H123. F37 is a nicotinamide binding site. Positions 107 and 108 each coordinate nicotinamide. H123 acts as the Proton acceptor in catalysis. Residues C131, C134, C151, and C154 each contribute to the Zn(2+) site. The NAD(+) site is built by T190, S191, N216, and I234.

It belongs to the sirtuin family. Class U subfamily. The cofactor is Zn(2+).

It localises to the cytoplasm. The catalysed reaction is N(6)-acetyl-L-lysyl-[protein] + NAD(+) + H2O = 2''-O-acetyl-ADP-D-ribose + nicotinamide + L-lysyl-[protein]. In terms of biological role, NAD-dependent protein deacetylase which modulates the activities of several enzymes which are inactive in their acetylated form. In Bacillus cereus (strain ZK / E33L), this protein is NAD-dependent protein deacetylase.